Here is a 378-residue protein sequence, read N- to C-terminus: MSHLDNGFRSLTLQRFPATDDVNPLQAWEAADEYLLQQLDDTEIRGPVLILNDAFGALSCALAEHKPYSIGDSYISELATRENLRLNGIDESSVKFLDSTADYPQQPGVVLIKVPKTLALLEQQLRALRKVVTSDTRIIAGAKARDIHTSTLELFEKVLGPTTTTLAWKKARLINCTFNEPPLADAPQTVSWKLEGTDWTIHNHANVFSRTGLDIGARFFMQHLPENLEGEIVDLGCGNGVIGLTLLDKNPQAKVVFVDESPMAVASSRLNVETNMPEALDRSEFMINNALSGVEPFRFNAVLCNPPFHQQHALTDNVAWEMFHHARRCLKINGELYIVANRHLDYFHKLKKIFGNCTTIATNNKFVVLKAVKLGRRR.

It belongs to the methyltransferase superfamily. RlmG family.

The protein resides in the cytoplasm. It catalyses the reaction guanosine(1835) in 23S rRNA + S-adenosyl-L-methionine = N(2)-methylguanosine(1835) in 23S rRNA + S-adenosyl-L-homocysteine + H(+). Its function is as follows. Specifically methylates the guanine in position 1835 (m2G1835) of 23S rRNA. In Shigella boydii serotype 4 (strain Sb227), this protein is Ribosomal RNA large subunit methyltransferase G.